A 172-amino-acid polypeptide reads, in one-letter code: WW domain binding protein VOPP1 (172 aa).

The N-terminal stretch at 1–22 is a signal peptide; it reads MARPLGRVAALLLGLLMECTEA. Residues 23 to 60 are Extracellular-facing; sequence KKHCWYFEGLYPTYYICRSYEDCCGSRCCVRALSIQRL. The helical transmembrane segment at 61-81 threads the bilayer; the sequence is WYFWFLLMMGVLFCCGAGFFI. The Cytoplasmic segment spans residues 82–172; sequence RRRMYPPPLI…PPYEQVVKDK (91 aa). The disordered stretch occupies residues 139 to 172; sequence QVQPNSPHGGTTYPPPPSYCNTPPPPYEQVVKDK. Residues 151-165 are compositionally biased toward pro residues; the sequence is YPPPPSYCNTPPPPY.

The protein belongs to the VOPP1/ECOP family. In terms of assembly, interacts with WWOX (via WW domain).

It localises to the cytoplasmic vesicle membrane. Its subcellular location is the late endosome membrane. The protein localises to the lysosome membrane. Its function is as follows. Increases the transcriptional activity of NFKB1 by facilitating its nuclear translocation, DNA-binding and associated apoptotic response, when overexpressed. May sequester WWOX in lysosomal vesicles and thereby regulate WWOX role as tumor suppressor. The protein is WW domain binding protein VOPP1 of Rattus norvegicus (Rat).